The sequence spans 850 residues: Pro-neuregulin-2, membrane-bound isoform (850 aa).

Residues Met1 to Asp96 form a disordered region. A propeptide spanning residues Met1–Ala111 is cleaved from the precursor. Residues Ser20–Pro59 show a composition bias toward low complexity. Residues Asn52 and Asn53 are each glycosylated (N-linked (GlcNAc...) asparagine). The segment covering Ala60 to Arg74 has biased composition (pro residues). The segment covering Ser75–Gly92 has biased composition (low complexity). Residues Cys112–Arg405 lie on the Extracellular side of the membrane. Asn147, Asn278, and Asn346 each carry an N-linked (GlcNAc...) asparagine glycan. Residues Pro237 to Ser332 form the Ig-like C2-type domain. Intrachain disulfides connect Cys257–Cys311, Cys345–Cys359, Cys353–Cys370, and Cys372–Cys381. The 42-residue stretch at His341–Leu382 folds into the EGF-like domain. The helical transmembrane segment at Val406 to Ala426 threads the bilayer. The Cytoplasmic portion of the chain corresponds to Tyr427–Leu850. Disordered regions lie at residues Thr492–Ser535, Glu566–Asp585, Leu647–Ala681, Leu700–Leu788, and Ala801–Leu850. Over residues Ser494 to Ser506 the composition is skewed to low complexity. Basic and acidic residues predominate over residues His514–Glu527. The segment covering Pro651–Gly665 has biased composition (pro residues). Low complexity predominate over residues Gly750–Ser767.

This sequence belongs to the neuregulin family. Interacts with ERBB3 and ERBB4. In terms of processing, proteolytic cleavage close to the plasma membrane on the external face leads to the release of the soluble growth factor form. Extensive glycosylation precedes the proteolytic cleavage. As to expression, restricted to the cerebellum in the adult.

It is found in the cell membrane. The protein resides in the secreted. Its function is as follows. Direct ligand for ERBB3 and ERBB4 tyrosine kinase receptors. Concomitantly recruits ERBB1 and ERBB2 coreceptors, resulting in ligand-stimulated tyrosine phosphorylation and activation of the ERBB receptors. May also promote the heterodimerization with the EGF receptor. The protein is Pro-neuregulin-2, membrane-bound isoform (NRG2) of Homo sapiens (Human).